The chain runs to 370 residues: DNA replication and repair protein RecF (370 aa).

An ATP-binding site is contributed by 30-37; the sequence is GENAQGKT.

The protein belongs to the RecF family.

It is found in the cytoplasm. Its function is as follows. The RecF protein is involved in DNA metabolism; it is required for DNA replication and normal SOS inducibility. RecF binds preferentially to single-stranded, linear DNA. It also seems to bind ATP. This chain is DNA replication and repair protein RecF, found in Listeria monocytogenes serotype 4b (strain CLIP80459).